The following is an 876-amino-acid chain: Paramyosin (876 aa).

The segment at 1–28 (MSARSAKFMYRSGNAGASGDLSVEYGTD) is nonhelical region. Positions 29 to 855 (LGALTRLEDK…IRAKHRSWVT (827 aa)) form a coiled coil. The segment at 856–876 (TSQVPGGTRQVFVTQEEQSNY) is nonhelical region.

It belongs to the paramyosin family. As to quaternary structure, homodimer.

The protein resides in the cytoplasm. The protein localises to the myofibril. Its function is as follows. Paramyosin is a major structural component of many thick filaments isolated from invertebrate muscles. In Sarcoptes scabiei (Itch mite), this protein is Paramyosin.